We begin with the raw amino-acid sequence, 292 residues long: uncharacterized protein (292 aa).

A helical transmembrane segment spans residues 13 to 35 (LFILFIIVVCIYLLPRVAINAFY).

The protein belongs to the serine esterase family.

The protein resides in the membrane. This is an uncharacterized protein from Salmonella typhi.